We begin with the raw amino-acid sequence, 62 residues long: Large ribosomal subunit protein uL29 (62 aa).

The protein belongs to the universal ribosomal protein uL29 family.

This Desulfatibacillum aliphaticivorans protein is Large ribosomal subunit protein uL29.